Here is a 439-residue protein sequence, read N- to C-terminus: Cell division protein DivIB (439 aa).

Disordered regions lie at residues 1-96 and 119-149; these read MDDK…DSNI and DNEQ…KSKV. The Cytoplasmic segment spans residues 1-173; the sequence is MDDKTKNDQQ…RRKRQKRIQY (173 aa). Residues 11–20 show a composition bias toward acidic residues; it reads ESNEDKDELE. Positions 26-38 are enriched in basic residues; sequence TSKKRRQRKRSKA. Residues 64 to 76 show a composition bias toward basic and acidic residues; the sequence is KDFKKEESNDKNN. Residues 77–86 are compositionally biased toward low complexity; the sequence is DSASSHANDN. Positions 87–96 are enriched in acidic residues; that stretch reads NIDDSTDSNI. Polar residues predominate over residues 119-133; sequence DNEQPQSAPKEQNSD. Residues 174-194 traverse the membrane as a helical segment; it reads SVITILVLLIAVILIYMFSPL. The POTRA domain occupies 195–263; the sequence is SKIAHVNING…NTLNVDITEN (69 aa). At 195–439 the chain is on the extracellular side; the sequence is SKIAHVNING…KINKQSSKNN (245 aa). The interval 396-439 is disordered; the sequence is YRGNTSSQSESDKNVTKSSQEENQAKEELQSVLNKINKQSSKNN. A compositionally biased stretch (basic and acidic residues) spans 405–424; sequence ESDKNVTKSSQEENQAKEEL. The span at 426–439 shows a compositional bias: polar residues; that stretch reads SVLNKINKQSSKNN.

Belongs to the FtsQ/DivIB family. DivIB subfamily.

The protein localises to the cell membrane. Its function is as follows. Cell division protein that may be involved in stabilizing or promoting the assembly of the division complex. This Staphylococcus aureus (strain NCTC 8325 / PS 47) protein is Cell division protein DivIB.